Here is a 906-residue protein sequence, read N- to C-terminus: Protein translocase subunit SecA (906 aa).

ATP is bound by residues Gln86, Gly104–Thr108, and Asp511. 2 stretches are compositionally biased toward basic and acidic residues: residues His853 to Glu865 and Val877 to Asp888. Residues His853–Glu906 are disordered. Positions 890, 892, 901, and 902 each coordinate Zn(2+). Over residues Lys896–Glu906 the composition is skewed to basic residues.

Belongs to the SecA family. As to quaternary structure, monomer and homodimer. Part of the essential Sec protein translocation apparatus which comprises SecA, SecYEG and auxiliary proteins SecDF-YajC and YidC. Requires Zn(2+) as cofactor.

It is found in the cell inner membrane. It localises to the cytoplasm. The enzyme catalyses ATP + H2O + cellular proteinSide 1 = ADP + phosphate + cellular proteinSide 2.. Its function is as follows. Part of the Sec protein translocase complex. Interacts with the SecYEG preprotein conducting channel. Has a central role in coupling the hydrolysis of ATP to the transfer of proteins into and across the cell membrane, serving both as a receptor for the preprotein-SecB complex and as an ATP-driven molecular motor driving the stepwise translocation of polypeptide chains across the membrane. The chain is Protein translocase subunit SecA from Francisella tularensis subsp. novicida (strain U112).